Consider the following 94-residue polypeptide: Acylphosphatase (94 aa).

In terms of domain architecture, Acylphosphatase-like spans 5–94; it reads RLTAFVHGHV…PRDVEGFVER (90 aa). Residues Arg-20 and Asn-38 contribute to the active site.

It belongs to the acylphosphatase family.

The catalysed reaction is an acyl phosphate + H2O = a carboxylate + phosphate + H(+). This Corynebacterium glutamicum (strain R) protein is Acylphosphatase (acyP).